The primary structure comprises 703 residues: Protein teflon (703 aa).

A C2H2-type 1 zinc finger spans residues 32-55; sequence MFCHFCKDIFTHLPEFMRHLQWSH. Disordered regions lie at residues 78 to 111, 138 to 161, and 339 to 434; these read TSED…PGSS, SHEQ…ARKP, and SQQP…SKLE. 2 stretches are compositionally biased toward polar residues: residues 84–94 and 138–147; these read QSQANSCSSGD and SHEQSYSKTP. The segment covering 148–161 has biased composition (basic and acidic residues); it reads PDSRTEGFRCARKP. Composition is skewed to polar residues over residues 339 to 352 and 364 to 373; these read SQQP…NNAV and SLTVISSSPI. C2H2-type zinc fingers lie at residues 649–672 and 677–700; these read YFCE…QSVH and FTCS…KTVH.

It belongs to the Teflon family.

The protein resides in the nucleus. Its subcellular location is the chromosome. Its function is as follows. Specifically required in males for proper segregation of autosomal bivalents at meiosis I. Expression is required in the male germ line prior to spermatocyte stage S4. May have a role as a bridging molecule maintaining adhesion to hold autosome bivalents together via heterochromatic connections. In Drosophila pseudoobscura pseudoobscura (Fruit fly), this protein is Protein teflon.